Here is a 325-residue protein sequence, read N- to C-terminus: Elongation factor P--(R)-beta-lysine ligase (325 aa).

Substrate is bound at residue 76–78 (SPE). ATP contacts are provided by residues 100-102 (RNE) and Asn-109. Substrate is bound at residue Tyr-118. 244 to 245 (EL) provides a ligand contact to ATP. Glu-251 provides a ligand contact to substrate. Gly-300 is an ATP binding site.

Belongs to the class-II aminoacyl-tRNA synthetase family. EpmA subfamily. Homodimer.

It catalyses the reaction D-beta-lysine + L-lysyl-[protein] + ATP = N(6)-((3R)-3,6-diaminohexanoyl)-L-lysyl-[protein] + AMP + diphosphate + H(+). In terms of biological role, with EpmB is involved in the beta-lysylation step of the post-translational modification of translation elongation factor P (EF-P). Catalyzes the ATP-dependent activation of (R)-beta-lysine produced by EpmB, forming a lysyl-adenylate, from which the beta-lysyl moiety is then transferred to the epsilon-amino group of a conserved specific lysine residue in EF-P. The protein is Elongation factor P--(R)-beta-lysine ligase of Klebsiella pneumoniae (strain 342).